The chain runs to 198 residues: Recombination protein RecR (198 aa).

The C4-type zinc-finger motif lies at 57-72 (CTVCGHITDTDPCYIC). The Toprim domain maps to 80–175 (TTICVVQDPK…KVTRIAHGLP (96 aa)).

This sequence belongs to the RecR family.

May play a role in DNA repair. It seems to be involved in an RecBC-independent recombinational process of DNA repair. It may act with RecF and RecO. This Geobacillus sp. (strain WCH70) protein is Recombination protein RecR.